Consider the following 183-residue polypeptide: Cell division protein SepF (183 aa).

The interval 13–58 (MHDDDDFDDDYEDYDDDFDEDYEDDKPSARKRLFTGSSKKDSVADE) is disordered. The span at 16 to 36 (DDDFDDDYEDYDDDFDEDYED) shows a compositional bias: acidic residues.

This sequence belongs to the SepF family. Homodimer. Interacts with FtsZ.

It is found in the cytoplasm. Cell division protein that is part of the divisome complex and is recruited early to the Z-ring. Probably stimulates Z-ring formation, perhaps through the cross-linking of FtsZ protofilaments. Its function overlaps with FtsA. In Lachnospira eligens (strain ATCC 27750 / DSM 3376 / VPI C15-48 / C15-B4) (Eubacterium eligens), this protein is Cell division protein SepF.